Consider the following 172-residue polypeptide: NADH-quinone oxidoreductase subunit B (172 aa).

[4Fe-4S] cluster-binding residues include cysteine 52, cysteine 53, cysteine 117, and cysteine 147.

This sequence belongs to the complex I 20 kDa subunit family. NDH-1 is composed of 14 different subunits. Subunits NuoB, C, D, E, F, and G constitute the peripheral sector of the complex. The cofactor is [4Fe-4S] cluster.

It localises to the cell inner membrane. The catalysed reaction is a quinone + NADH + 5 H(+)(in) = a quinol + NAD(+) + 4 H(+)(out). In terms of biological role, NDH-1 shuttles electrons from NADH, via FMN and iron-sulfur (Fe-S) centers, to quinones in the respiratory chain. Couples the redox reaction to proton translocation (for every two electrons transferred, four hydrogen ions are translocated across the cytoplasmic membrane), and thus conserves the redox energy in a proton gradient. This chain is NADH-quinone oxidoreductase subunit B, found in Ehrlichia ruminantium (strain Gardel).